The primary structure comprises 58 residues: Glutathione reductase (58 aa).

Positions 5, 12, 13, and 21 each coordinate FAD. A disulfide bridge links Cys-13 with Cys-18.

The protein belongs to the class-I pyridine nucleotide-disulfide oxidoreductase family. In terms of assembly, homodimer. The cofactor is FAD.

Its subcellular location is the cytoplasm. It catalyses the reaction 2 glutathione + NADP(+) = glutathione disulfide + NADPH + H(+). Functionally, catalyzes the reduction of glutathione disulfide (GSSG) to reduced glutathione (GSH). Constitutes the major mechanism to maintain a high GSH:GSSG ratio in the cytosol. The sequence is that of Glutathione reductase from Spirulina sp.